A 336-amino-acid polypeptide reads, in one-letter code: Probable allantoicase 2 (336 aa).

Belongs to the allantoicase family.

The enzyme catalyses allantoate + H2O = (S)-ureidoglycolate + urea. It functions in the pathway nitrogen metabolism; (S)-allantoin degradation; (S)-ureidoglycolate from allantoate (aminidohydrolase route): step 1/1. The protein is Probable allantoicase 2 of Burkholderia mallei (strain ATCC 23344).